The primary structure comprises 291 residues: MQDNALLKQALKHPLYEKIQKLNLKVQNSNYTIDDSFNIFCDEKLDEEIKNIALELKPWRKGPFKINKLFIDTEWQSFIKFNILKPYMQEIKGKVVADIGCNNGYYMFKMLEFNPSKLIGFDPSIKYFLQFFLLNSLAKTPIQYELLGVADVPNYGIKFDVIFCLGVIYHRSDPIAMLKQLKQSLNKDGVVFLDTMYIEDEREIALIPQKTYSKIPNIFFIPSILGLRNWCYRAGFSEFEVITTRQTDFEEQRKTQWIDSYSLDQFLDKNDSNLTCEGYEAPKRVYVKLKV.

Carboxy-S-adenosyl-L-methionine-binding positions include Lys-61, Trp-75, Lys-80, Gly-100, 122-124 (DPS), Tyr-169, and Arg-284.

This sequence belongs to the class I-like SAM-binding methyltransferase superfamily. CmoB family. Homotetramer.

The enzyme catalyses carboxy-S-adenosyl-L-methionine + 5-hydroxyuridine(34) in tRNA = 5-carboxymethoxyuridine(34) in tRNA + S-adenosyl-L-homocysteine + H(+). In terms of biological role, catalyzes carboxymethyl transfer from carboxy-S-adenosyl-L-methionine (Cx-SAM) to 5-hydroxyuridine (ho5U) to form 5-carboxymethoxyuridine (cmo5U) at position 34 in tRNAs. The protein is tRNA U34 carboxymethyltransferase of Campylobacter lari (strain RM2100 / D67 / ATCC BAA-1060).